Here is a 198-residue protein sequence, read N- to C-terminus: MEPGLWLLFGLTVTSAAGLVPCPQPGDAGKSGVPGTPPTARSEGDIQEPVAMTAVQGPSPRSPEQEQELGRFGEQASKGGPVHGRARRCTCFTYKDKECVYYCHLDIIWINTPEQTVPYGLSNYRGSFRGRRSTGLFPQSPQPSKWTQRCACVQSQDSACLHFCTRTLAVSRNSRTATNPDKEEEPASRGNGGLRPTR.

An N-terminal signal peptide occupies residues 1 to 16 (MEPGLWLLFGLTVTSA). A propeptide spanning residues 17–86 (AGLVPCPQPG…SKGGPVHGRA (70 aa)) is cleaved from the precursor. The tract at residues 22–79 (CPQPGDAGKSGVPGTPPTARSEGDIQEPVAMTAVQGPSPRSPEQEQELGRFGEQASKG) is disordered. 2 cysteine pairs are disulfide-bonded: Cys-89–Cys-103 and Cys-91–Cys-99. Residues 110-198 (INTPEQTVPY…RGNGGLRPTR (89 aa)) constitute a propeptide that is removed on maturation. Positions 150-164 (CACVQSQDSACLHFC) are endothelin-like. The disordered stretch occupies residues 174–198 (SRTATNPDKEEEPASRGNGGLRPTR).

Belongs to the endothelin/sarafotoxin family. In terms of tissue distribution, expressed in which included heart, lung, liver, kidney, spleen, stomach, pancreas, duodenum, colon, uterus, ovary and testis.

The protein resides in the secreted. Functionally, endothelins are endothelium-derived vasoconstrictor peptides. This Canis lupus familiaris (Dog) protein is Endothelin-3 (EDN3).